We begin with the raw amino-acid sequence, 602 residues long: Elongation factor 4 (602 aa).

In terms of domain architecture, tr-type G spans 2–184; the sequence is DHIRNFSIIA…AVIARMPPPK (183 aa). Residues 14-19 and 131-134 contribute to the GTP site; these read DHGKST and NKMD.

It belongs to the TRAFAC class translation factor GTPase superfamily. Classic translation factor GTPase family. LepA subfamily.

The protein localises to the cell inner membrane. The enzyme catalyses GTP + H2O = GDP + phosphate + H(+). Its function is as follows. Required for accurate and efficient protein synthesis under certain stress conditions. May act as a fidelity factor of the translation reaction, by catalyzing a one-codon backward translocation of tRNAs on improperly translocated ribosomes. Back-translocation proceeds from a post-translocation (POST) complex to a pre-translocation (PRE) complex, thus giving elongation factor G a second chance to translocate the tRNAs correctly. Binds to ribosomes in a GTP-dependent manner. This chain is Elongation factor 4, found in Leptothrix cholodnii (strain ATCC 51168 / LMG 8142 / SP-6) (Leptothrix discophora (strain SP-6)).